Consider the following 484-residue polypeptide: Cobyric acid synthase (484 aa).

The 188-residue stretch at 248 to 435 (VLKVIVPVLP…LHGLFEGSQS (188 aa)) folds into the GATase cobBQ-type domain. Residue Cys329 is the Nucleophile of the active site. His427 is a catalytic residue.

This sequence belongs to the CobB/CobQ family. CobQ subfamily.

It functions in the pathway cofactor biosynthesis; adenosylcobalamin biosynthesis. Catalyzes amidations at positions B, D, E, and G on adenosylcobyrinic A,C-diamide. NH(2) groups are provided by glutamine, and one molecule of ATP is hydrogenolyzed for each amidation. The protein is Cobyric acid synthase of Pseudomonas putida (strain GB-1).